The chain runs to 397 residues: MFHRIEEALEDLKKGKVVIVCDDENRENEGDFIALAEYITPETINFMITHGRGLVCVPITEGYAERLQLEPMVSHNTDSHHTAFTVSIDHVSTTTGISAHERATTIQELLNPASKGADFNRPGHIFPLIAKEGGVLRRAGHTEAAVDLAKLCGAEPAGVICEIINEDGTMARVPDLIECAKQFDIKMITIEDLIAYRRHHETLVTREVEITLPTDFGTFHAIGYSNSLDTKEHIALVKGDISTGEPVLVRVHSECLTGDVFGSHRCDCGPQLHAALAQIEREGKGVLLYMRQEGRGIGLLNKLRAYKLQEEGFDTVEANEKLGFPADLRDYGIGAQILKDLGLQSLRLLTNNPRKIAGLQGYDLEVIERVPLQMPAKEENKSYLQTKVNKLGHLLNL.

The interval 1–199 (MFHRIEEALE…IEDLIAYRRH (199 aa)) is DHBP synthase. Residues 26–27 (RE), aspartate 31, 138–142 (RAGHT), and glutamate 162 each bind D-ribulose 5-phosphate. A Mg(2+)-binding site is contributed by glutamate 27. Histidine 141 provides a ligand contact to Mg(2+). The segment at 200-397 (HETLVTREVE…VNKLGHLLNL (198 aa)) is GTP cyclohydrolase II. 250–254 (RVHSE) serves as a coordination point for GTP. Cysteine 255, cysteine 266, and cysteine 268 together coordinate Zn(2+). GTP is bound by residues glutamine 271, 293 to 295 (EGR), and threonine 315. The active-site Proton acceptor; for GTP cyclohydrolase activity is aspartate 327. Arginine 329 acts as the Nucleophile; for GTP cyclohydrolase activity in catalysis. Positions 350 and 355 each coordinate GTP.

In the N-terminal section; belongs to the DHBP synthase family. It in the C-terminal section; belongs to the GTP cyclohydrolase II family. Mg(2+) is required as a cofactor. The cofactor is Mn(2+). It depends on Zn(2+) as a cofactor.

The enzyme catalyses D-ribulose 5-phosphate = (2S)-2-hydroxy-3-oxobutyl phosphate + formate + H(+). It catalyses the reaction GTP + 4 H2O = 2,5-diamino-6-hydroxy-4-(5-phosphoribosylamino)-pyrimidine + formate + 2 phosphate + 3 H(+). The protein operates within cofactor biosynthesis; riboflavin biosynthesis; 2-hydroxy-3-oxobutyl phosphate from D-ribulose 5-phosphate: step 1/1. It participates in cofactor biosynthesis; riboflavin biosynthesis; 5-amino-6-(D-ribitylamino)uracil from GTP: step 1/4. Functionally, catalyzes the conversion of D-ribulose 5-phosphate to formate and 3,4-dihydroxy-2-butanone 4-phosphate. Its function is as follows. Catalyzes the conversion of GTP to 2,5-diamino-6-ribosylamino-4(3H)-pyrimidinone 5'-phosphate (DARP), formate and pyrophosphate. The polypeptide is Riboflavin biosynthesis protein RibBA (Bacillus cereus (strain B4264)).